The following is a 161-amino-acid chain: Large ribosomal subunit protein uL10 (161 aa).

The protein belongs to the universal ribosomal protein uL10 family. As to quaternary structure, part of the ribosomal stalk of the 50S ribosomal subunit. The N-terminus interacts with L11 and the large rRNA to form the base of the stalk. The C-terminus forms an elongated spine to which L12 dimers bind in a sequential fashion forming a multimeric L10(L12)X complex.

Forms part of the ribosomal stalk, playing a central role in the interaction of the ribosome with GTP-bound translation factors. This Campylobacter fetus subsp. fetus (strain 82-40) protein is Large ribosomal subunit protein uL10.